The sequence spans 324 residues: UDP-N-acetylenolpyruvoylglucosamine reductase (324 aa).

Residues 36–203 enclose the FAD-binding PCMH-type domain; the sequence is FRAGGLAELM…TSVLFEGYPE (168 aa). Arg183 is a catalytic residue. Ser232 acts as the Proton donor in catalysis. Glu302 is an active-site residue.

It belongs to the MurB family. FAD is required as a cofactor.

Its subcellular location is the cytoplasm. The enzyme catalyses UDP-N-acetyl-alpha-D-muramate + NADP(+) = UDP-N-acetyl-3-O-(1-carboxyvinyl)-alpha-D-glucosamine + NADPH + H(+). Its pathway is cell wall biogenesis; peptidoglycan biosynthesis. In terms of biological role, cell wall formation. The chain is UDP-N-acetylenolpyruvoylglucosamine reductase from Rhizobium etli (strain CIAT 652).